Reading from the N-terminus, the 333-residue chain is Taste receptor type 2 member 110 (333 aa).

Residues 1–13 (MFSQIISTSDIFT) lie on the Extracellular side of the membrane. Residues 14 to 34 (FTIILFVELVIGILGNGFIAL) traverse the membrane as a helical segment. The Cytoplasmic portion of the chain corresponds to 35–60 (VNIMDWTKRRSISSADQILTALAITR). A helical membrane pass occupies residues 61-81 (FLYVWFMIICILLFMLCPHLL). Topologically, residues 82-89 (TRSEIVTS) are extracellular. Residues 90–110 (IGIIWIVNNHFSVWLATCLGV) form a helical membrane-spanning segment. The Cytoplasmic portion of the chain corresponds to 111–133 (FYFLKIANFSNSLFLYLKWRVKK). Residues 134–154 (VVLMIIQVSMIFLILNLLSLS) traverse the membrane as a helical segment. The Extracellular portion of the chain corresponds to 155–205 (MYDQFSIDVYEGNTSYNLGDSTPFPTISLFINSSKVFVITNSSHIFLPINS). Asn-186 and Asn-195 each carry an N-linked (GlcNAc...) asparagine glycan. A helical transmembrane segment spans residues 206 to 226 (LFMLIPFTVSLVAFLMLIFSL). Residues 227–255 (WKHHKKMQVNAKPPRDASTMAHIKALQTG) lie on the Cytoplasmic side of the membrane. A helical transmembrane segment spans residues 256–276 (FSFLLLYAVYLLFIVIGMLSL). The Extracellular segment spans residues 277–283 (RLIGGKL). Residues 284–304 (ILLFDHISGIGFPISHSFVLI) form a helical membrane-spanning segment. The Cytoplasmic segment spans residues 305–333 (LGNNKLRQASLSVLHCLRCRSKDMDTMGP).

It belongs to the G-protein coupled receptor T2R family.

Its subcellular location is the membrane. Its function is as follows. Gustducin-coupled receptor implicated in the perception of bitter compounds in the oral cavity and the gastrointestinal tract. Signals through PLCB2 and the calcium-regulated cation channel TRPM5. This is Taste receptor type 2 member 110 from Mus musculus (Mouse).